Consider the following 90-residue polypeptide: Bombyxin D-1 (90 aa).

The signal sequence occupies residues 1–18 (MKLLGFFLSWVSVCAIVS). 3 disulfide bridges follow: Cys27–Cys77, Cys39–Cys90, and Cys76–Cys81. Residues 48-68 (SVAHYAGYGWPLLPSLSEERG) constitute a propeptide, c peptide like.

The protein belongs to the insulin family. Heterodimer of a B chain and an A chain linked by two disulfide bonds.

The protein resides in the secreted. Its function is as follows. Brain peptide responsible for activation of prothoracic glands to produce ecdysone in insects. This is Bombyxin D-1 (BBXD1) from Bombyx mori (Silk moth).